Reading from the N-terminus, the 1175-residue chain is DNA-directed RNA polymerase subunit beta (1175 aa).

The disordered stretch occupies residues proline 1142–alanine 1175. Over residues serine 1165 to alanine 1175 the composition is skewed to basic and acidic residues.

It belongs to the RNA polymerase beta chain family. As to quaternary structure, the RNAP catalytic core consists of 2 alpha, 1 beta, 1 beta' and 1 omega subunit. When a sigma factor is associated with the core the holoenzyme is formed, which can initiate transcription.

The catalysed reaction is RNA(n) + a ribonucleoside 5'-triphosphate = RNA(n+1) + diphosphate. Functionally, DNA-dependent RNA polymerase catalyzes the transcription of DNA into RNA using the four ribonucleoside triphosphates as substrates. The sequence is that of DNA-directed RNA polymerase subunit beta from Corynebacterium diphtheriae (strain ATCC 700971 / NCTC 13129 / Biotype gravis).